Reading from the N-terminus, the 1052-residue chain is Membrane-bound transcription factor site-1 protease (1052 aa).

The signal sequence occupies residues Met-1–Gly-17. Positions Lys-18–Leu-186 are excised as a propeptide. Asn-148 carries N-linked (GlcNAc...) asparagine glycosylation. Position 168 is a phosphoserine (Ser-168). Over Arg-187 to Gly-999 the chain is Lumenal. Residues Pro-190–Tyr-472 form the Peptidase S8 domain. Catalysis depends on Asp-218, which acts as the Charge relay system. Asn-236 is a glycosylation site (N-linked (GlcNAc...) asparagine). The Charge relay system role is filled by His-249. Asn-305 carries N-linked (GlcNAc...) asparagine glycosylation. Ser-414 (charge relay system) is an active-site residue. Residues Asn-515 and Asn-728 are each glycosylated (N-linked (GlcNAc...) asparagine). Residues Pro-877–Arg-887 show a composition bias toward polar residues. Positions Pro-877–Met-900 are disordered. N-linked (GlcNAc...) asparagine glycosylation is present at Asn-939. Residues Gln-1000 to Ser-1022 traverse the membrane as a helical segment. Residues Lys-1023 to Val-1052 are Cytoplasmic-facing. Residues Ser-1026–Arg-1037 are compositionally biased toward basic residues. The segment at Ser-1026–Val-1052 is disordered.

Belongs to the peptidase S8 family. In terms of assembly, interacts with LYSET; this interaction bridges GNPTAB to MBTPS1. The cofactor is Ca(2+). In terms of processing, the 148 kDa zymogen is processed progressively into two membrane-bound 120 and 106 kDa forms in the endoplasmic reticulum, and late into a secreted 98 kDa form. The propeptide is autocatalytically removed through an intramolecular cleavage after Leu-186. Further cleavage generates 14, 10, and 8 kDa intermediates. In terms of tissue distribution, widely expressed. In adult rat, highly expressed in anterior pituitary, thyroid and adrenal glands and in liver. In 2-day old rat, detected in developing skin, striated muscles, cardiac muscles, bones, teeth and internal organs. Highly expressed in retina, cerebellum, pituitary, submaxillary, thyroid and adrenal glands, molars, thymus, kidney and intestine.

Its subcellular location is the endoplasmic reticulum membrane. The protein resides in the golgi apparatus membrane. It carries out the reaction Processes precursors containing basic and hydrophobic/aliphatic residues at P4 and P2, respectively, with a relatively relaxed acceptance of amino acids at P1 and P3.. Its activity is regulated as follows. Inhibited by divalent copper and zinc ions, but not by nickel or cobalt. Inhibited by its prosegment, but not smaller fragments. Inhibited by 4-(2-aminoethyl)benzenesulfonyl fluoride (AEBSF), a serine protease inhibitor. Its function is as follows. Serine protease that cleaves after hydrophobic or small residues, provided that Arg or Lys is in position P4: known substrates include SREBF1/SREBP1, SREBF2/SREBP2, BDNF, GNPTAB, ATF6, ATF6B and FAM20C. Cleaves substrates after Arg-Ser-Val-Leu (SREBP2), Arg-His-Leu-Leu (ATF6), Arg-Gly-Leu-Thr (BDNF) and its own propeptide after Arg-Arg-Leu-Leu. Catalyzes the first step in the proteolytic activation of the sterol regulatory element-binding proteins (SREBPs) SREBF1/SREBP1 and SREBF2/SREBP2. Also mediates the first step in the proteolytic activation of the cyclic AMP-dependent transcription factor ATF-6 (ATF6 and ATF6B). Mediates the protein cleavage of GNPTAB into subunit alpha and beta, thereby participating in biogenesis of lysosomes. Cleaves the propeptide from FAM20C which is required for FAM20C secretion from the Golgi apparatus membrane and for enhancement of FAM20C kinase activity, promoting osteoblast differentiation and biomineralization. Involved in the regulation of M6P-dependent Golgi-to-lysosome trafficking of lysosomal enzymes. It is required for the activation of CREB3L2/BBF2H7, a transcriptional activator of MIA3/TANGO and other genes controlling mega vesicle formation. Therefore, it plays a key role in the regulation of mega vesicle-mediated collagen trafficking. In astrocytes and osteoblasts, upon DNA damage and ER stress, mediates the first step of the regulated intramembrane proteolytic activation of the transcription factor CREB3L1, leading to the inhibition of cell-cycle progression. This is Membrane-bound transcription factor site-1 protease (Mbtps1) from Rattus norvegicus (Rat).